We begin with the raw amino-acid sequence, 406 residues long: 5-methylthioadenosine/S-adenosylhomocysteine deaminase (406 aa).

Zn(2+) is bound by residues His-55 and His-57. Residues Glu-84, Arg-136, Arg-148, and His-173 each contribute to the substrate site. His-200 contacts Zn(2+). Residues Glu-203 and Asp-279 each contribute to the substrate site. Asp-279 serves as a coordination point for Zn(2+).

Belongs to the metallo-dependent hydrolases superfamily. MTA/SAH deaminase family. Zn(2+) serves as cofactor.

The enzyme catalyses S-adenosyl-L-homocysteine + H2O + H(+) = S-inosyl-L-homocysteine + NH4(+). It carries out the reaction S-methyl-5'-thioadenosine + H2O + H(+) = S-methyl-5'-thioinosine + NH4(+). Its function is as follows. Catalyzes the deamination of 5-methylthioadenosine and S-adenosyl-L-homocysteine into 5-methylthioinosine and S-inosyl-L-homocysteine, respectively. Is also able to deaminate adenosine. Adenosine-5-monophosphate (AMP) and S-adenosyl-L-methionine (SAM) are not enzyme substrates. This chain is 5-methylthioadenosine/S-adenosylhomocysteine deaminase (mtaD), found in Thermotoga maritima (strain ATCC 43589 / DSM 3109 / JCM 10099 / NBRC 100826 / MSB8).